Reading from the N-terminus, the 534-residue chain is Putative fimbrium tip subunit Fim1C (534 aa).

Residues 1-21 form the signal peptide; it reads MKQYKLMQVALLAILLFGWAG. Residue Cys-22 is the site of N-palmitoyl cysteine attachment. A lipid anchor (S-diacylglycerol cysteine) is attached at Cys-22. A propeptide spanning residues 22–54 is cleaved from the precursor; it reads CSQNEEEVPGNVRNGIVLNVTDTGIISNEPSTR.

This sequence belongs to the bacteroidetes fimbrillin superfamily. Mfa-like family. In terms of assembly, may be part of the fimbrial tip.

Its subcellular location is the fimbrium. It is found in the cell outer membrane. Functionally, probably a component of the fimbrium tip. Fimbriae are filamentous appendages on the cell surface that mediate cell adhesion and biofilm formation. This Bacteroides ovatus (strain ATCC 8483 / DSM 1896 / JCM 5824 / BCRC 10623 / CCUG 4943 / NCTC 11153) protein is Putative fimbrium tip subunit Fim1C.